Consider the following 163-residue polypeptide: Periplasmic nitrate reductase, electron transfer subunit (163 aa).

An N-terminal signal peptide occupies residues 1–32; the sequence is MRSQDPSRRLSRRLWTLFALALCLVTGTVALA. Heme c-binding residues include His76, Cys90, Cys93, His94, His111, Cys130, Cys133, and His134.

This sequence belongs to the NapB family. As to quaternary structure, component of the periplasmic nitrate reductase NapAB complex composed of NapA and NapB. Binds 2 heme C groups per subunit.

The protein resides in the periplasm. Its function is as follows. Electron transfer subunit of the periplasmic nitrate reductase complex NapAB. Receives electrons from the membrane-anchored tetraheme c-type NapC protein and transfers these to NapA subunit, thus allowing electron flow between membrane and periplasm. Essential for periplasmic nitrate reduction with nitrate as the terminal electron acceptor. This is Periplasmic nitrate reductase, electron transfer subunit from Neorhizobium galegae (Rhizobium galegae).